A 137-amino-acid polypeptide reads, in one-letter code: Acidic phospholipase A2 1 (137 aa).

The first 11 residues, 1–11 (LVAVCVSLLGA), serve as a signal peptide directing secretion. A propeptide spanning residues 12 to 19 (ANIPPQPL) is cleaved from the precursor. 7 cysteine pairs are disulfide-bonded: C30/C89, C44/C136, C46/C62, C61/C117, C68/C110, C78/C103, and C96/C108. Residues Y45, G47, and G49 each contribute to the Ca(2+) site. Residues G49 and H65 each contribute to the tridecanoate site. Residue H65 is part of the active site. D66 contributes to the Ca(2+) binding site. Residue D111 is part of the active site.

As to quaternary structure, monomer. Requires Ca(2+) as cofactor. In terms of tissue distribution, expressed by the venom gland.

It localises to the secreted. The catalysed reaction is a 1,2-diacyl-sn-glycero-3-phosphocholine + H2O = a 1-acyl-sn-glycero-3-phosphocholine + a fatty acid + H(+). Snake venom phospholipase A2 (PLA2) that shows anticoagulant and neurotoxic activities. PLA2 catalyzes the calcium-dependent hydrolysis of the 2-acyl groups in 3-sn-phosphoglycerides. The polypeptide is Acidic phospholipase A2 1 (Bungarus caeruleus (Indian krait)).